We begin with the raw amino-acid sequence, 328 residues long: Formimidoylglutamase (328 aa).

Mn(2+)-binding residues include His133, Asp159, His161, Asp163, Asp253, and Asp255.

This sequence belongs to the arginase family. Mn(2+) serves as cofactor.

It carries out the reaction N-formimidoyl-L-glutamate + H2O = formamide + L-glutamate. It participates in amino-acid degradation; L-histidine degradation into L-glutamate; L-glutamate from N-formimidoyl-L-glutamate (hydrolase route): step 1/1. Its function is as follows. Catalyzes the conversion of N-formimidoyl-L-glutamate to L-glutamate and formamide. The chain is Formimidoylglutamase from Streptococcus pyogenes serotype M3 (strain ATCC BAA-595 / MGAS315).